A 1511-amino-acid chain; its full sequence is Pleiotropic ABC efflux transporter of multiple drugs (1511 aa).

A compositionally biased stretch (polar residues) spans 1–14 (MPEAKLNNNVNDVT). The tract at residues 1–32 (MPEAKLNNNVNDVTSYSSASSSTENAADLHNY) is disordered. The Cytoplasmic portion of the chain corresponds to 1-517 (MPEAKLNNNV…LLIRNMWRLR (517 aa)). Position 22 is a phosphoserine (S22). Phosphothreonine occurs at positions 49 and 51. The segment at 52 to 71 (AQSMQNSTQSAPNKSDAQSI) is disordered. Residues S54, S58, and S61 each carry the phosphoserine modification. One can recognise an ABC transporter 1 domain in the interval 161–410 (LRKFQRSKET…FEDMGYVCPS (250 aa)). A helical membrane pass occupies residues 518-542 (NNIGFTLFMILGNCSMALILGSMFF). The Extracellular portion of the chain corresponds to 543 to 558 (KIMKKGDTSTFYFRGS). A helical transmembrane segment spans residues 559–579 (AMFFAILFNAFSSLLEIFSLY). Topologically, residues 580–611 (EARPITEKHRTYSLYHPSADAFASVLSEIPSK) are cytoplasmic. A helical membrane pass occupies residues 612 to 628 (LIIAVCFNIIFYFLVDF). Topologically, residues 629–631 (RRN) are extracellular. Residues 632–650 (GGVFFFYLLINIVAVFSMS) traverse the membrane as a helical segment. Residues 651 to 665 (HLFRCVGSLTKTLSE) are Cytoplasmic-facing. The helical transmembrane segment at 666–685 (AMVPASMLLLALSMYTGFAI) threads the bilayer. The Extracellular portion of the chain corresponds to 686 to 774 (PKKKILRWSK…QYYHKDKWRG (89 aa)). The N-linked (GlcNAc...) asparagine glycan is linked to N734. A helical membrane pass occupies residues 775–793 (FGIGMAYVVFFFFVYLFLC). At 794–1237 (EYNEGAKQKG…GTSLQGLQNQ (444 aa)) the chain is on the cytoplasmic side. Residues 824–858 (EKNANDPENVGERSDLSSDRKMLQESSEEESDTYG) are disordered. A Glycyl lysine isopeptide (Lys-Gly) (interchain with G-Cter in ubiquitin) cross-link involves residue K825. Residues 833–846 (VGERSDLSSDRKML) show a composition bias toward basic and acidic residues. Residues S837, S840, S841, S849, S850, and S854 each carry the phosphoserine modification. The ABC transporter 2 domain maps to 869 to 1112 (FHWRNLCYEV…MIDYFESHGA (244 aa)). Residue 905 to 912 (GASGAGKT) participates in ATP binding. A helical membrane pass occupies residues 1238–1260 (MLAVFMFTVIFNPILQQYLPSFV). Residues 1261–1291 (QQRDLYEARERPSRTFSWISFIFAQIFVEVP) are Extracellular-facing. A helical membrane pass occupies residues 1292–1313 (WNILAGTIAYFIYYYPIGFYSN). Over 1314-1324 (ASAAGQLHERG) the chain is Cytoplasmic. Residues 1325 to 1349 (ALFWLFSCAFYVYVGSMGLLVISFN) traverse the membrane as a helical segment. Residues 1350–1354 (QVAES) lie on the Extracellular side of the membrane. A helical transmembrane segment spans residues 1355–1379 (AANLASLLFTMSLSFCGVMTTPSAM). The Cytoplasmic segment spans residues 1380–1388 (PRFWIFMYR). A helical transmembrane segment spans residues 1389–1407 (VSPLTYFIQALLAVGVANV). The Extracellular segment spans residues 1408-1476 (DVKCADYELL…VNSFYSERWR (69 aa)). N1447 is a glycosylation site (N-linked (GlcNAc...) asparagine). A helical membrane pass occupies residues 1477-1499 (NYGIFICYIAFNYIAGVFFYWLA). The Cytoplasmic portion of the chain corresponds to 1500 to 1511 (RVPKKNGKLSKK).

The protein belongs to the ABC transporter superfamily. ABCG family. PDR (TC 3.A.1.205) subfamily. In terms of processing, ubiquitinylation mediates endocytosis and vacuolar degradation. Phosphorylation by casein kinase I stabilizes the protein half-life.

The protein resides in the cell membrane. With respect to regulation, FK506, isonitrile, enniatin, RU49953, kitasatospora E420, staurosporine CGP42700, prenyl-flavonoids, D-octapeptides were found to be inhibitors in vivo. Vanadate and oligomycin were found to be inhibitors in vitro. In terms of biological role, active efflux of weakly charged organic compounds of 90 cubic Angstroms to 300 cubic Angstroms surface volume. Confers resistance to numerous chemicals including cycloheximide, sulfomethuron methyl, steroids, antiseptics, antibiotics, anticancer, herbicides, mycotoxins, insecticides, ionophores, alkaloids, flavonoids, phenothiazines, organotin compounds, carbazoles, lysosomotropic aminoesters, detergents, rhodamines and other fluorophores, azoles and other antifungals. Exhibits nucleoside triphosphatase activity. The sequence is that of Pleiotropic ABC efflux transporter of multiple drugs (PDR5) from Saccharomyces cerevisiae (strain ATCC 204508 / S288c) (Baker's yeast).